The following is a 180-amino-acid chain: ATP-dependent protease subunit HslV (180 aa).

Thr-5 is an active-site residue. Na(+) contacts are provided by Gly-161, Cys-164, and Thr-167.

This sequence belongs to the peptidase T1B family. HslV subfamily. As to quaternary structure, a double ring-shaped homohexamer of HslV is capped on each side by a ring-shaped HslU homohexamer. The assembly of the HslU/HslV complex is dependent on binding of ATP.

It localises to the cytoplasm. It catalyses the reaction ATP-dependent cleavage of peptide bonds with broad specificity.. Its activity is regulated as follows. Allosterically activated by HslU binding. Its function is as follows. Protease subunit of a proteasome-like degradation complex believed to be a general protein degrading machinery. The sequence is that of ATP-dependent protease subunit HslV from Campylobacter jejuni subsp. jejuni serotype O:6 (strain 81116 / NCTC 11828).